A 77-amino-acid polypeptide reads, in one-letter code: Metallothionein-like protein type 2 (77 aa).

Belongs to the metallothionein superfamily. Type 15 family. Expressed in the left, stem and flower, at very low levels in roots and is not detectable in mesophyll protoplasts.

Functionally, metallothioneins have a high content of cysteine residues that bind various heavy metals. The chain is Metallothionein-like protein type 2 (MTI) from Vicia faba (Broad bean).